Here is a 461-residue protein sequence, read N- to C-terminus: Alcaligin biosynthesis enzyme (461 aa).

9–15 (VAIGIGP) lines the FAD pocket.

Belongs to the lysine N(6)-hydroxylase/L-ornithine N(5)-oxygenase family. FAD serves as cofactor.

The protein operates within siderophore biosynthesis; alcaligin biosynthesis. The polypeptide is Alcaligin biosynthesis enzyme (alcA) (Bordetella bronchiseptica (strain ATCC BAA-588 / NCTC 13252 / RB50) (Alcaligenes bronchisepticus)).